The following is a 374-amino-acid chain: Carbamoyl phosphate synthase small chain (374 aa).

A CPSase region spans residues 1-183 (MVLADGQMIW…QNGYSVVDNQ (183 aa)). The L-glutamine site is built by serine 41, glycine 235, and glycine 237. In terms of domain architecture, Glutamine amidotransferase type-1 spans 187 to 374 (HVVAIDYGLK…FIDLIAKERP (188 aa)). Cysteine 264 functions as the Nucleophile in the catalytic mechanism. 5 residues coordinate L-glutamine: leucine 265, glutamine 268, asparagine 306, glycine 308, and phenylalanine 309. Catalysis depends on residues histidine 348 and glutamate 350.

This sequence belongs to the CarA family. In terms of assembly, composed of two chains; the small (or glutamine) chain promotes the hydrolysis of glutamine to ammonia, which is used by the large (or ammonia) chain to synthesize carbamoyl phosphate. Tetramer of heterodimers (alpha,beta)4.

It carries out the reaction hydrogencarbonate + L-glutamine + 2 ATP + H2O = carbamoyl phosphate + L-glutamate + 2 ADP + phosphate + 2 H(+). The catalysed reaction is L-glutamine + H2O = L-glutamate + NH4(+). Its pathway is amino-acid biosynthesis; L-arginine biosynthesis; carbamoyl phosphate from bicarbonate: step 1/1. It functions in the pathway pyrimidine metabolism; UMP biosynthesis via de novo pathway; (S)-dihydroorotate from bicarbonate: step 1/3. In terms of biological role, small subunit of the glutamine-dependent carbamoyl phosphate synthetase (CPSase). CPSase catalyzes the formation of carbamoyl phosphate from the ammonia moiety of glutamine, carbonate, and phosphate donated by ATP, constituting the first step of 2 biosynthetic pathways, one leading to arginine and/or urea and the other to pyrimidine nucleotides. The small subunit (glutamine amidotransferase) binds and cleaves glutamine to supply the large subunit with the substrate ammonia. The polypeptide is Carbamoyl phosphate synthase small chain (Zymomonas mobilis subsp. mobilis (strain ATCC 31821 / ZM4 / CP4)).